Consider the following 204-residue polypeptide: Peptide deformylase (204 aa).

Residues Cys131 and His174 each coordinate Fe cation. Glu175 is an active-site residue. His178 serves as a coordination point for Fe cation.

This sequence belongs to the polypeptide deformylase family. Fe(2+) is required as a cofactor.

The enzyme catalyses N-terminal N-formyl-L-methionyl-[peptide] + H2O = N-terminal L-methionyl-[peptide] + formate. Functionally, removes the formyl group from the N-terminal Met of newly synthesized proteins. Requires at least a dipeptide for an efficient rate of reaction. N-terminal L-methionine is a prerequisite for activity but the enzyme has broad specificity at other positions. The sequence is that of Peptide deformylase from Streptococcus mutans serotype c (strain ATCC 700610 / UA159).